Here is a 152-residue protein sequence, read N- to C-terminus: Protein CHLOROPLAST VESICULATION (152 aa).

The transit peptide at 1–22 (MAGRISCCLNLPPLDSNSAQSL) directs the protein to the chloroplast. Residues 48–65 (CSFVLGVAATVVIGGIQI) form a helical membrane-spanning segment. Positions 92–152 (RWSDKRTCPP…RVNRGGCFSV (61 aa)) are important for chloroplast destabilization and the formation of CV-containing vesicles.

In terms of assembly, interacts with the photosystem II subunit PsbO1 via its C-terminal region in the chloroplast thylakoid membrane and in CV-containing vesicles (CCVs). As to expression, mostly expressed in senescent and mature leaves but not in young leaves.

It is found in the plastid. The protein resides in the chloroplast membrane. It localises to the chloroplast thylakoid membrane. The protein localises to the chloroplast envelope. Its subcellular location is the vacuole. It is found in the vesicle. Its function is as follows. Triggers stress-induced chloroplast degradation, independently of autophagy and senescence-associated vacuoles. After targeting to the chloroplast, triggers its destabilization and subsequent disassembly, inducing the formation of CV-containing vesicles (CCVs) carrying stromal proteins, envelope membrane proteins, and thylakoid membrane proteins which are released from the chloroplasts and mobilized to the vacuole for proteolysis. The chain is Protein CHLOROPLAST VESICULATION from Arabidopsis thaliana (Mouse-ear cress).